A 179-amino-acid chain; its full sequence is Transcription factor NF-E4 (179 aa).

The residue at position 43 (K43) is an N6-acetyllysine. The interval 100–179 (AMKATGPHNA…QLPSLHLSQG (80 aa)) is disordered. 2 stretches are compositionally biased toward polar residues: residues 143–153 (LSQSNPPTRIS) and 163–179 (ALEQTPQQLPSLHLSQG).

In terms of assembly, component of the SSP (stage selector protein) complex, which appears to be a heteromer of TFCP2 and 2 copies of NFE4. Interacts with HDAC1 and PCAF. Isoform 2 interacts with TFCP2. Acetylation at Lys-43 prolongs the protein half-life by preventing ubiquitin-mediated degradation and reduces the interaction between NF-E4 and HDAC1, potentially maximizing the activating ability of the factor at the gamma-promoter. In terms of processing, ubiquitinated; leading to its degradation by the proteasome. Acetylation at Lys-43 prevents ubiquitination. As to expression, specifically expressed in fetal liver, cord blood and bone marrow. Also expressed in the K562 and HEL cell lines, which constitutively express the fetal globin genes.

It is found in the nucleus. In terms of biological role, functions as part of the SSP (stage selector protein) complex, a complex that contributes to the preferential expression of the gamma-gene in fetal erythroid cells by facilitating the interaction of the gamma-globin genes with enhancer elements contained in the locus control region (LCR). The complex binds to the stage selector element (SSE) in the proximal gamma-globin promoter. In contrast, isoform 2 acts as a repressor of gamma-globin gene expression by preventing NFE2 and RNA polymerase II recruitment to the promoter. This chain is Transcription factor NF-E4 (NFE4), found in Homo sapiens (Human).